A 229-amino-acid polypeptide reads, in one-letter code: Uracil-DNA glycosylase (229 aa).

Asp65 serves as the catalytic Proton acceptor.

Belongs to the uracil-DNA glycosylase (UDG) superfamily. UNG family.

Its subcellular location is the cytoplasm. The enzyme catalyses Hydrolyzes single-stranded DNA or mismatched double-stranded DNA and polynucleotides, releasing free uracil.. Its function is as follows. Excises uracil residues from the DNA which can arise as a result of misincorporation of dUMP residues by DNA polymerase or due to deamination of cytosine. This is Uracil-DNA glycosylase from Oceanobacillus iheyensis (strain DSM 14371 / CIP 107618 / JCM 11309 / KCTC 3954 / HTE831).